Here is a 566-residue protein sequence, read N- to C-terminus: Type 2 DNA topoisomerase 6 subunit B (566 aa).

ATP-binding positions include N48, D80, 101-102 (TK), 111-118 (GQQGIGIS), and K475.

The protein belongs to the TOP6B family. In terms of assembly, homodimer. Heterotetramer of two Top6A and two Top6B chains.

It catalyses the reaction ATP-dependent breakage, passage and rejoining of double-stranded DNA.. Its function is as follows. Relaxes both positive and negative superturns and exhibits a strong decatenase activity. This chain is Type 2 DNA topoisomerase 6 subunit B, found in Thermococcus sibiricus (strain DSM 12597 / MM 739).